We begin with the raw amino-acid sequence, 545 residues long: MVKTILYKDTARWTLEKGFDALTEAVAVTLGPKGRNIVLEKKFGAPQIVNDGVTIAKEIELEDPAENTGISLLRQAASKTNDVAGDGTTTAIVLAHAMLKEGLRNVTAGADPLTVKRGIDKATEFVIEKIQEHARPIKDSRDIEQVATISAGNDPEVGRIVAEAMERVGKEGVISLEEGRSTTTELEVTEGMRFDRGYVSPYFVTDPERMEAVLEEPHILITDRKITMVQDLVPILEQIARTGKPLLIIADDIEKEALATLVVNHLRGVLRVAAVKAPGFGAQRKAVLEDIAALTGGQVISEDTGLKLENVRLEMLGKARRAIVTKDDTTIVAEGNEEAVKARIEQIRRQIQEVESSYDKEKLQQRLAKLAGGVAVIKVGAATETELKDRKLRLEDAINATKAAVEEGIVPGGGTTIAHIAPQLEEWAKSQMKDEELTGTMIVARALYAPLRRIADNAGANGAVIVERVRELPFDEGYDAVANKFVNMFEAGIVDPAKVTRSALQNAASIGGMVLTTEGVVVEKPDKQAKAPAGVGPGPGEGFDY.

ATP-binding positions include 29 to 32 (TLGP), 86 to 90 (DGTTT), G413, 479 to 481 (DAV), and D495. Positions 526-545 (DKQAKAPAGVGPGPGEGFDY) are disordered. A compositionally biased stretch (gly residues) spans 535–545 (VGPGPGEGFDY).

This sequence belongs to the chaperonin (HSP60) family. In terms of assembly, forms a cylinder of 14 subunits composed of two heptameric rings stacked back-to-back. Interacts with the co-chaperonin GroES.

The protein localises to the cytoplasm. It catalyses the reaction ATP + H2O + a folded polypeptide = ADP + phosphate + an unfolded polypeptide.. Together with its co-chaperonin GroES, plays an essential role in assisting protein folding. The GroEL-GroES system forms a nano-cage that allows encapsulation of the non-native substrate proteins and provides a physical environment optimized to promote and accelerate protein folding. The polypeptide is Chaperonin GroEL 3 (Trichormus variabilis (strain ATCC 29413 / PCC 7937) (Anabaena variabilis)).